The chain runs to 339 residues: MILLTGGGTGGHLFPALAVAEELRRRGHPVFYLGAEGGLEARLLPKTPIPHALIPAGKLDRSALRPQEAPKVLQGVLRAQALLRRLRPKAVLSTGGYAGFPGGMAASLLGIPLLLHEQNARLGLANRALAPLAKGLALSVPLALPAPLARKARVVGYPVREVRYPKDEAKRRLGFDPQRPLLLVLGGSQGSLELNERLPPVLKGLPVQVLHQVGERWVERFRPLEGEGYRVEGFVDTPLAMSAADLLLSRAGAGTLAEAAFHGLPAILFPLSPKLDGGAQLANARAYAQAGGAVLGAWDRLSSQILEALEDLEARRRAMARLSPEGAAARLADLLEAFL.

Residues T9 to G11, N119, R160, S188, and Q280 each bind UDP-N-acetyl-alpha-D-glucosamine.

It belongs to the glycosyltransferase 28 family. MurG subfamily.

It localises to the cell inner membrane. It carries out the reaction di-trans,octa-cis-undecaprenyl diphospho-N-acetyl-alpha-D-muramoyl-L-alanyl-D-glutamyl-meso-2,6-diaminopimeloyl-D-alanyl-D-alanine + UDP-N-acetyl-alpha-D-glucosamine = di-trans,octa-cis-undecaprenyl diphospho-[N-acetyl-alpha-D-glucosaminyl-(1-&gt;4)]-N-acetyl-alpha-D-muramoyl-L-alanyl-D-glutamyl-meso-2,6-diaminopimeloyl-D-alanyl-D-alanine + UDP + H(+). It participates in cell wall biogenesis; peptidoglycan biosynthesis. Functionally, cell wall formation. Catalyzes the transfer of a GlcNAc subunit on undecaprenyl-pyrophosphoryl-MurNAc-pentapeptide (lipid intermediate I) to form undecaprenyl-pyrophosphoryl-MurNAc-(pentapeptide)GlcNAc (lipid intermediate II). This Thermus thermophilus (strain ATCC BAA-163 / DSM 7039 / HB27) protein is UDP-N-acetylglucosamine--N-acetylmuramyl-(pentapeptide) pyrophosphoryl-undecaprenol N-acetylglucosamine transferase.